Reading from the N-terminus, the 98-residue chain is NADH-ubiquinone oxidoreductase chain 4L (98 aa).

The next 3 helical transmembrane spans lie at 1–21, 28–48, and 59–79; these read MMSI…GVLI, STLL…ALLI, and APLV…ALLV.

The protein belongs to the complex I subunit 4L family. Core subunit of respiratory chain NADH dehydrogenase (Complex I) which is composed of 45 different subunits.

The protein localises to the mitochondrion inner membrane. The enzyme catalyses a ubiquinone + NADH + 5 H(+)(in) = a ubiquinol + NAD(+) + 4 H(+)(out). Core subunit of the mitochondrial membrane respiratory chain NADH dehydrogenase (Complex I) which catalyzes electron transfer from NADH through the respiratory chain, using ubiquinone as an electron acceptor. Part of the enzyme membrane arm which is embedded in the lipid bilayer and involved in proton translocation. The chain is NADH-ubiquinone oxidoreductase chain 4L (MT-ND4L) from Pseudocheirus peregrinus (Common ring-tailed possum).